Reading from the N-terminus, the 659-residue chain is Nitrate import ATP-binding protein NrtC (659 aa).

The region spanning 5–239 (LAVDHVHQVF…RPRQRLEMME (235 aa)) is the ABC transporter domain. 42–49 (GHSGCGKS) contributes to the ATP binding site. Residues 255 to 278 (QQQRRAKRRAKAAAPAPAVAASQQ) are linker. Positions 279 to 659 (KTVRLGFLPG…VAPIPLATSA (381 aa)) are nrtA-like.

Belongs to the ABC transporter superfamily. Nitrate/nitrite/cyanate uptake transporter (NitT) (TC 3.A.1.16) family. The complex is composed of two ATP-binding proteins (NrtC and NrtD), two transmembrane proteins (NrtB) and a solute-binding protein (NrtA).

Its subcellular location is the cell inner membrane. It carries out the reaction nitrate(out) + ATP + H2O = nitrate(in) + ADP + phosphate + H(+). Its activity is regulated as follows. Transport is inhibited by ammonium. The C-terminal domain of NrtC is involved in the ammonium-promoted inhibition of the nitrate/nitrite transporter. Its function is as follows. Part of the ABC transporter complex NrtABCD involved in nitrate uptake. The complex is probably also involved in nitrite transport. Probably responsible for energy coupling to the transport system. The chain is Nitrate import ATP-binding protein NrtC from Synechococcus elongatus (strain ATCC 33912 / PCC 7942 / FACHB-805) (Anacystis nidulans R2).